The following is a 948-amino-acid chain: Glycine dehydrogenase (decarboxylating) (948 aa).

The residue at position 696 (lysine 696) is an N6-(pyridoxal phosphate)lysine.

It belongs to the GcvP family. As to quaternary structure, the glycine cleavage system is composed of four proteins: P, T, L and H. Requires pyridoxal 5'-phosphate as cofactor.

It catalyses the reaction N(6)-[(R)-lipoyl]-L-lysyl-[glycine-cleavage complex H protein] + glycine + H(+) = N(6)-[(R)-S(8)-aminomethyldihydrolipoyl]-L-lysyl-[glycine-cleavage complex H protein] + CO2. The glycine cleavage system catalyzes the degradation of glycine. The P protein binds the alpha-amino group of glycine through its pyridoxal phosphate cofactor; CO(2) is released and the remaining methylamine moiety is then transferred to the lipoamide cofactor of the H protein. The chain is Glycine dehydrogenase (decarboxylating) from Akkermansia muciniphila (strain ATCC BAA-835 / DSM 22959 / JCM 33894 / BCRC 81048 / CCUG 64013 / CIP 107961 / Muc).